A 142-amino-acid polypeptide reads, in one-letter code: Large ribosomal subunit protein uL13 (142 aa).

Belongs to the universal ribosomal protein uL13 family. As to quaternary structure, part of the 50S ribosomal subunit.

Its function is as follows. This protein is one of the early assembly proteins of the 50S ribosomal subunit, although it is not seen to bind rRNA by itself. It is important during the early stages of 50S assembly. The polypeptide is Large ribosomal subunit protein uL13 (Psychrobacter arcticus (strain DSM 17307 / VKM B-2377 / 273-4)).